The sequence spans 525 residues: GMP synthase [glutamine-hydrolyzing] (525 aa).

The 199-residue stretch at 9 to 207 (RILILDFGSQ…VRDICQCEAL (199 aa)) folds into the Glutamine amidotransferase type-1 domain. Residue cysteine 86 is the Nucleophile of the active site. Catalysis depends on residues histidine 181 and glutamate 183. The 193-residue stretch at 208 to 400 (WTPAKIIDDA…LGLPYDMLYR (193 aa)) folds into the GMPS ATP-PPase domain. 235-241 (SGGVDSS) lines the ATP pocket.

Homodimer.

It catalyses the reaction XMP + L-glutamine + ATP + H2O = GMP + L-glutamate + AMP + diphosphate + 2 H(+). The protein operates within purine metabolism; GMP biosynthesis; GMP from XMP (L-Gln route): step 1/1. Catalyzes the synthesis of GMP from XMP. The polypeptide is GMP synthase [glutamine-hydrolyzing] (Salmonella newport (strain SL254)).